Consider the following 2531-residue polypeptide: MAGTDSSTPIAIIGLSGRFPGEASNPQKLWSVLMNKQSTRSEVPPDRFNVNAFYHPSGSRAGTVNTRWGHFMTRDPAAFDAPFFSVLPEEARAMDPQSRMALECAFEAFENAGMTMDAVAGTRTACYVASFTHDYAELLAQDGESQPRYKFTGCGAGMLANRISWFFDLQAPSVTVDTACSSSLVALHLGCQSIHTGDADMVLVGGANVILSPQMMASQSSLGFLSPDGRSKAFDEQADGYARGEGVGFLLLKPLGAALADGDAIRAVIRGTGVNQDGRTAGITVPSAQAQERLIRSVYDRACLDPVETPFVEAHGTGTRKGDLAEASSLASVFCHRRLPQNPLYIGSVKTNIGHLEAAAGVAQVIKTVLALENGIIPPNIWFTRPSTALPLDRWRLKVPVEPVSWPEGEKRRASINSFGYGGTNAHCVMETLEEYSMGQGAAKAGTLCQEPRCNHEARPREEEAPMLIFWSSHDKGGISRLAAQYAQYLEAKVKSATDRSSLTRRLCMTLHSRRSVMPWKSYIVSHSANSIVESFRNGAAQPLRSSEPPAIVFVFTGQGAQWPGMGRQLIRYPEYLESLQLAGRFLQCLGLQVSVIDEIKATPEQSSLASPEVSQTLCTVLQVALVDLLESFGINPTAVIGHSGGEIAAAYAKGAISREAAWTIAFHRGRLCSSLPDYAPSLQGGMLVAGLGREDCATYIGRLTEGVAVIACVNSPLSCTVAGDLSALDQLEGLLSEAGCFHRRLRVSRAYHSPHMQVIAGECYKAISSARPLADTEKSLNTTMYSTVTRGVVECSDLGPDYWVSNMIEPVEFVGAVESVIRDLGNRTAPTVFVEIGPHSALQGPLRQILDAASSAERFPYTSLLVRGRDAHHTLLESMGSLIQHGCHLKLHEINQLSTEEGFLVNLPPYPWNHDERNRYWAESSVSRKRRFRQHARHDLCGIRVEDDLPGEATWRNILSPSENPWILDHRVQGTIVYPAAGMLTAVVEAVRESVRNVLEISYFELRDVKISRPIVFSSEEDVVHTRLRLRQETGQCPGSFEFQHYSEKGDGWELNCSGSVLAGTPSDSPDAAHRTRYAHCRAASYVETTPRQAYSQWASVGLQFGRWFQNLTQLSKGPSSAIGTVRIPSTTDCMPCGFEQDMLVHPVVLDALVQLGLSTSKEEYEEPHDTMVPVAFSRVHISADIPQGPGTEMVGYSVINDSASGVNVAASDTQWAQPWIILDGLELATLSVRSGDAVGPTAARVPRKLAAATEWLPSIIHTPGDIIQRACNLPGESMQADRACELQWAALIWIQRILRGCPLTDVSPSPPHLRRLHHGMTRLYNSAIQGDSFPEDSRLKMLLSSPRKVQDEALQQVANSSIDGEILDHHCRMLDRILRGNMHSIEALLEESRLHRWYAEGITWRANHDKVSSYLRLHARNNAQAQILEIGGGTGGLTLSALRAMTLSDGSALFDSYCFTDISGGFFEKARKKFAAWAHCMSFVTLNIEHDLERQGFGEAQFDLILADNVLHATKSIRHTLSAVRKLLKPTGRLVLSEITRNMPHITMTVGALEGWWLGVEDGRVWEPTLSVEQWDGALRDTGFSGVDISLHDRPKGDHIMTGMVATARQLGLTPPPTPAVIIIHMHNLTPRVRTFVTGCITQLRALGMDVAVESLGSSSAHDNLHDKTVVLLLDADPEQRDLATINETEWTALKHTLLSCADAVWITRGANADGWNPWASMAQGLVRSLRAENPATAITMVDIACEQDLDSATTISSITRLALAGRRAKITHESHDWEYCIRGREILIPRVMTEDGVNGAVFKSVKSETEQIPFGQPGTSVALTTIEPLRFVQDPAYWLEPLGKDEAEVATRATHLVSSQGQNNSSHGLVTVCGTVTRLGTACHSELSVGDRVMTIQRGAIRNLYRCPLTLCHRIPEKLGDFGVAVRVLWAYTTAFYCLVHKASLKAGEAVLIDCASNTLQESLIRLAQHARAEVFLLVSSEARKNQLASTFLVPPDHILSTGGEGLQGLDMGRRFDLILLDAAPTNLLQQYLAPGARLVLVQHQGRTQHSSFHGSNGSVDRHESWFLDSKGTRLRLPIPGDARMYTIAPDTLSHEDRTIVAQILRHVTELVRSQEIHADSGGAKPGCSRSEESLHITNCVEGAPNQLVVEAHGRALVPDFHNKVIKSRPTAHLLPNATYIIAGGSGGLGASLARWMCHRGARHIVILSRQADTRPGVAKLIEDLAVNGVKVAAVPCDITDSQQDSVFHNMSFGAWNRAIHPKVMGSWNLHTHCPSEVDFFILLSSFVGTVGLRGQANYAAGNSFQDALAHHRRSRGQAGVSLSLGFIDGAGFIAQSSGRVAENVSKFNFLHIQQSEFLQLVELAVTSPDRLPAQVITGCGTGGMVAAREGDPGDVYWLRDPRFQLLAQVDLHHFQRMNSEPAAEGFSLGALLAAAETVGAAATAVLDALCRKLATAASIEAGDIDTSRQLSSYGVDSLLAVDLRAYLATEARLDISVFELMRSRPMRELARDLALRSKYFRSSHVAT.

In terms of domain architecture, Ketosynthase family 3 (KS3) spans 7–432 (STPIAIIGLS…GTNAHCVMET (426 aa)). Active-site for beta-ketoacyl synthase activity residues include cysteine 180, histidine 315, and histidine 355. A malonyl-CoA:ACP transacylase (MAT) domain region spans residues 554–882 (FVFTGQGAQW…HHTLLESMGS (329 aa)). Serine 644 acts as the For malonyltransferase activity in catalysis. An N-terminal hotdog fold region spans residues 939–1069 (HDLCGIRVED…GSVLAGTPSD (131 aa)). The PKS/mFAS DH domain maps to 939 to 1238 (HDLCGIRVED…LATLSVRSGD (300 aa)). The segment at 940–1236 (DLCGIRVEDD…LELATLSVRS (297 aa)) is dehydratase (DH) domain. The active-site Proton acceptor; for dehydratase activity is histidine 971. Residues 1087–1238 (YVETTPRQAY…LATLSVRSGD (152 aa)) form a C-terminal hotdog fold region. The Proton donor; for dehydratase activity role is filled by aspartate 1152. The interval 1414-1592 (SSYLRLHARN…DTGFSGVDIS (179 aa)) is methyltransferase (CMet) domain. Residues 1832 to 2133 (LRFVQDPAYW…SGGAKPGCSR (302 aa)) are enoyl reductase (ER) domain. A ketoreductase (KR) domain region spans residues 2156–2331 (HGRALVPDFH…AGVSLSLGFI (176 aa)). The Carrier domain occupies 2444–2521 (AAATAVLDAL…ELARDLALRS (78 aa)). Serine 2481 carries the post-translational modification O-(pantetheine 4'-phosphoryl)serine.

It participates in secondary metabolite biosynthesis; terpenoid biosynthesis. In terms of biological role, highly reducing polyketide synthase; part of the gene cluster that mediates the biosynthesis of calidodehydroaustin, a fungal meroterpenoid. The first step of the pathway is the synthesis of 3,5-dimethylorsellinic acid by the polyketide synthase ausA. 3,5-dimethylorsellinic acid is then prenylated by the polyprenyl transferase ausN. Further epoxidation by the FAD-dependent monooxygenase ausM and cyclization by the probable terpene cyclase ausL lead to the formation of protoaustinoid A. Protoaustinoid A is then oxidized to spiro-lactone preaustinoid A3 by the combined action of the FAD-binding monooxygenases ausB and ausC, and the dioxygenase ausE. Acid-catalyzed keto-rearrangement and ring contraction of the tetraketide portion of preaustinoid A3 by ausJ lead to the formation of preaustinoid A4. The aldo-keto reductase ausK, with the help of ausH, is involved in the next step by transforming preaustinoid A4 into isoaustinone which is in turn hydroxylated by the P450 monooxygenase ausI to form austinolide. The cytochrome P450 monooxygenase ausG modifies austinolide to austinol. Austinol is further acetylated to austin by the O-acetyltransferase ausP, which spontaneously changes to dehydroaustin. The cytochrome P450 monooxygenase ausR then converts dehydroaustin is into 7-dehydrodehydroaustin. The hydroxylation catalyzed by ausR permits the O-acetyltransferase ausQ to add an additional acetyl group to the molecule, leading to the formation of acetoxydehydroaustin. The short chain dehydrogenase ausT catalyzes the reduction of the double bond present between carbon atoms 1 and 2 to convert 7-dehydrodehydroaustin into 1,2-dihydro-7-hydroxydehydroaustin. AusQ catalyzes not only an acetylation reaction but also the addition of the PKS ausV diketide product to 1,2-dihydro-7-hydroxydehydroaustin, forming precalidodehydroaustin. Finally, the iron/alpha-ketoglutarate-dependent dioxygenase converts precalidodehydroaustin into calidodehydroaustin. The sequence is that of Highly reducing polyketide synthase ausV from Aspergillus calidoustus.